A 194-amino-acid chain; its full sequence is tRNA(Phe) 7-((3-amino-3-carboxypropyl)-4-demethylwyosine(37)-N(4))-methyltransferase 1 (194 aa).

The protein belongs to the TYW3 family.

The enzyme catalyses 4-demethyl-7-[(3S)-3-amino-3-carboxypropyl]wyosine(37) in tRNA(Phe) + S-adenosyl-L-methionine = 7-[(3S)-3-amino-3-carboxypropyl]wyosine(37) in tRNA(Phe) + S-adenosyl-L-homocysteine + H(+). Its function is as follows. S-adenosyl-L-methionine-dependent methyltransferase that acts as a component of the wyosine derivatives biosynthesis pathway. Probably methylates N-4 position of wybutosine-86 to produce wybutosine-72. This is tRNA(Phe) 7-((3-amino-3-carboxypropyl)-4-demethylwyosine(37)-N(4))-methyltransferase 1 from Pyrococcus abyssi (strain GE5 / Orsay).